The sequence spans 274 residues: NH(3)-dependent NAD(+) synthetase (274 aa).

Position 46-53 (46-53 (GISGGQDS)) interacts with ATP. Aspartate 52 is a binding site for Mg(2+). Arginine 140 lines the deamido-NAD(+) pocket. Threonine 160 contributes to the ATP binding site. Mg(2+) is bound at residue glutamate 165. The deamido-NAD(+) site is built by lysine 173 and aspartate 180. ATP-binding residues include lysine 189 and threonine 211. Position 260–261 (260–261 (HK)) interacts with deamido-NAD(+).

It belongs to the NAD synthetase family. In terms of assembly, homodimer.

It catalyses the reaction deamido-NAD(+) + NH4(+) + ATP = AMP + diphosphate + NAD(+) + H(+). The protein operates within cofactor biosynthesis; NAD(+) biosynthesis; NAD(+) from deamido-NAD(+) (ammonia route): step 1/1. In terms of biological role, catalyzes the ATP-dependent amidation of deamido-NAD to form NAD. Uses ammonia as a nitrogen source. This is NH(3)-dependent NAD(+) synthetase from Streptococcus pyogenes serotype M3 (strain ATCC BAA-595 / MGAS315).